We begin with the raw amino-acid sequence, 186 residues long: Histone deacetylase complex subunit SAP25 (186 aa).

Disordered stretches follow at residues 1-25 (MSPLPLRDPSHQANAGPRLVEPSCG) and 148-186 (EQTPNCVASSLPSTSCPDPVSVSEDPGPSGDQSCSGTDT). Composition is skewed to polar residues over residues 148–163 (EQTPNCVASSLPSTSC) and 177–186 (GDQSCSGTDT).

In terms of assembly, may be a component of the mSIN3A corepressor complex. Interacts with SIN3A and HDAC2. As to expression, widely expressed.

Its subcellular location is the nucleus. It localises to the cytoplasm. Involved in the transcriptional repression mediated by the mSIN3A but not the N-CoR corepressor complex. The chain is Histone deacetylase complex subunit SAP25 (Sap25) from Mus musculus (Mouse).